Consider the following 234-residue polypeptide: Superoxide dismutase [Mn], mitochondrial (234 aa).

The transit peptide at 1–34 directs the protein to the mitochondrion; the sequence is MFSIRSSSRVLLKASSATTRATLNAAASKTFTRS. 4 residues coordinate Mn(2+): H60, H108, D198, and H202.

Belongs to the iron/manganese superoxide dismutase family. In terms of assembly, homotetramer. It depends on Mn(2+) as a cofactor.

The protein localises to the mitochondrion matrix. It catalyses the reaction 2 superoxide + 2 H(+) = H2O2 + O2. In terms of biological role, destroys superoxide anion radicals which are normally produced within the cells and which are toxic to biological systems. This chain is Superoxide dismutase [Mn], mitochondrial (SOD2), found in Candida albicans (Yeast).